The primary structure comprises 433 residues: Probable dipeptidase (433 aa).

C20 is an active-site residue.

Belongs to the peptidase C69 family.

It catalyses the reaction an L-aminoacyl-L-amino acid + H2O = 2 an L-alpha-amino acid. The protein is Probable dipeptidase (pipD) of Salmonella dublin.